Here is a 180-residue protein sequence, read N- to C-terminus: Der GTPase-activating protein YihI (180 aa).

The segment covering Met1 to Val10 has biased composition (polar residues). Disordered regions lie at residues Met1 to Thr102 and Asp158 to Glu180. Over residues Thr21–Arg32 the composition is skewed to basic and acidic residues. Polar residues predominate over residues Ser45–Gln54. Positions Lys55–Ile67 are enriched in basic and acidic residues. The span at Pro84–Pro93 shows a compositional bias: low complexity.

It belongs to the YihI family. Interacts with Der.

A GTPase-activating protein (GAP) that modifies Der/EngA GTPase function. May play a role in ribosome biogenesis. The sequence is that of Der GTPase-activating protein YihI from Erwinia tasmaniensis (strain DSM 17950 / CFBP 7177 / CIP 109463 / NCPPB 4357 / Et1/99).